Consider the following 432-residue polypeptide: Transcription factor E2F1 (432 aa).

Disordered regions lie at residues 39–85 and 98–126; these read DVGA…GRPP and YLAG…KSRY. Residues 65–106 form a cyclin A:CDK2 binding region; it reads ATPQAPRPAPSAPRPALGRPPVKRRLDLETDHQYLAGSSGPF. The interval 87-189 is interaction with BIRC2/c-IAP1; it reads KRRLDLETDH…KKSKNHIQWL (103 aa). The DNA-binding element occupies 108-192; that stretch reads GRGRHPGKGV…KNHIQWLGSR (85 aa). 3 positions are modified to N6-acetyllysine: Lys-115, Lys-118, and Lys-123. The tract at residues 151-172 is leucine-zipper; the sequence is LNWAAEVLKVQKRRIYDITNVL. The DEF box motif lies at 156–192; that stretch reads EVLKVQKRRIYDITNVLEGIQLIAKKSKNHIQWLGSR. Lys-183 bears the N6-methyllysine; by SETD7 mark. The segment at 190–377 is required for interaction with TRIM28; that stretch reads GSRTMVGIGQ…RLSPLVAADS (188 aa). The segment at 193-282 is dimerization; sequence TMVGIGQRLE…AVDSAETFQI (90 aa). The tract at residues 297-342 is disordered; it reads PEESAEGISPGRTSYQETSGEDRNADSGTAGPPPSPPSTSPTLDPS. The interval 363 to 432 is transactivation; the sequence is PMEEDRLSPL…DFGDLTPLDF (70 aa). Ser-370 and Ser-398 each carry phosphoserine. Residues 404 to 421 are RB1 binding; the sequence is VDYHFGLEEGEGIRDLFD. Position 428 is a phosphothreonine (Thr-428).

Belongs to the E2F/DP family. Component of the DRTF1/E2F transcription factor complex. Forms heterodimers with DP family members. The E2F1 complex binds specifically hypophosphorylated RB1, the interaction represses E2F1-driven transcription. During the cell cycle, RB1 becomes phosphorylated in mid-to-late G1 phase, detaches from the DRTF1/E2F complex, rendering E2F transcriptionally active. Interacts with TRRAP, which probably mediates its interaction with histone acetyltransferase complexes, leading to transcription activation. Binds TOPBP1 and EAPP. Interacts with ARID3A. Interacts with TRIM28; the interaction inhibits E2F1 acetylation through recruiting HDAC1 and represses its transcriptional activity. Interaction with KAT2B; the interaction acetylates E2F1 enhancing its DNA-binding and transcriptional activity. Interacts with BIRC2/c-IAP1 (via BIR domains). The complex TFDP1:E2F1 interacts with CEBPA; the interaction prevents CEBPA binding to target genes promoters and represses its transcriptional activity. Interacts with RRP1B. Interacts with HCFC1. Interacts with KMT2E; the interaction is probably indirect and is mediated via HCFC1. Interacts with DCAF5 and L3MBTL3; the interaction requires methylation at Lys-183 and is necessary to target E2F1 for ubiquitination by the CRL4-DCAF5 E3 ubiquitin ligase complex. Post-translationally, phosphorylated by CDK2 and cyclin A-CDK2 in the S-phase. Phosphorylation by CHEK2 stabilizes E2F1 upon DNA damage and regulates its effect on transcription and apoptosis. Phosphorylation at Ser-398 by GSK3B promotes interaction with USP11, leading to its deubiquitination and stabilization. Ubiquitinated via 'Lys-63'-linked ubiquitin, leading to its degradation. Deubiquitinated by USP11 following phosphorylation by GSK3B, promoting its stability. In terms of processing, acetylation stimulates DNA-binding. Enhanced under stress conditions such as DNA damage and inhibited by retinoblastoma protein RB1. Regulated by KAP1/TRIM28 which recruits HDAC1 to E2F1 resulting in deacetylation. Post-translationally, methylation at Lys-183 by SETD7 promotes E2F1 ubiquitin-dependent proteasomal degradation.

The protein resides in the nucleus. With respect to regulation, BIRC2/c-IAP1 stimulates its transcriptional activity. Functionally, transcription activator that binds DNA cooperatively with DP proteins through the E2 recognition site, 5'-TTTC[CG]CGC-3' found in the promoter region of a number of genes whose products are involved in cell cycle regulation or in DNA replication. The DRTF1/E2F complex functions in the control of cell-cycle progression from G1 to S phase. E2F1 binds preferentially RB1 in a cell-cycle dependent manner. It can mediate both cell proliferation and TP53/p53-dependent apoptosis. Blocks adipocyte differentiation by binding to specific promoters repressing CEBPA binding to its target gene promoters. Directly activates transcription of PEG10. Positively regulates transcription of RRP1B. This chain is Transcription factor E2F1, found in Rattus norvegicus (Rat).